The following is a 344-amino-acid chain: MMVIRPVERSDVSALMQLASKTGGGLTSLPANEATLSARIERAIKTWQGELPKSEQGYVFVLEDSETGTVAGICAIEVAVGLNDPWHNYRVGTLVHASKELNVYNALPTLFLSNDHTGSSELCTLFLDPDWRKEGNGYLLSKSRFMFMAAFRDKFNDKVVAEMRGVIDEHGYSPFWQSLGKRFFSMDFSRADFLCGTGQKAFIAELMPKHPIYTHFLSQEAQDVIGQVHPQTAPARAVLEKEGFRYRNYIDIFDGGPTLECDIDRVRAIRKSRLVEVAEGQPAQGDFPACLVANENYHHFRVVLARTDPATERLILTAAQLDALKCHAGERVRLVRLCAVEKTA.

A succinyl-CoA-binding site is contributed by L125. H229 serves as the catalytic Proton donor.

This sequence belongs to the arginine N-succinyltransferase family.

It catalyses the reaction succinyl-CoA + L-arginine = N(2)-succinyl-L-arginine + CoA + H(+). It participates in amino-acid degradation; L-arginine degradation via AST pathway; L-glutamate and succinate from L-arginine: step 1/5. In terms of biological role, catalyzes the transfer of succinyl-CoA to arginine to produce N(2)-succinylarginine. The protein is Arginine N-succinyltransferase of Shigella boydii serotype 18 (strain CDC 3083-94 / BS512).